Reading from the N-terminus, the 163-residue chain is Phosphopantetheine adenylyltransferase (163 aa).

Residue Ser-9 participates in substrate binding. Residues 9-10 and His-17 each bind ATP; that span reads SF. Residues Lys-41, Thr-73, and Arg-87 each coordinate substrate. Residues 88–90, Glu-98, and 123–129 contribute to the ATP site; these read GLR and YSFISSG.

This sequence belongs to the bacterial CoaD family. As to quaternary structure, homohexamer. The cofactor is Mg(2+).

Its subcellular location is the cytoplasm. It carries out the reaction (R)-4'-phosphopantetheine + ATP + H(+) = 3'-dephospho-CoA + diphosphate. The protein operates within cofactor biosynthesis; coenzyme A biosynthesis; CoA from (R)-pantothenate: step 4/5. Its function is as follows. Reversibly transfers an adenylyl group from ATP to 4'-phosphopantetheine, yielding dephospho-CoA (dPCoA) and pyrophosphate. The polypeptide is Phosphopantetheine adenylyltransferase (Desulforudis audaxviator (strain MP104C)).